The following is a 476-amino-acid chain: Deoxyguanosinetriphosphate triphosphohydrolase-like protein 2 (476 aa).

Residues 1 to 20 (MYTDADRSREVVPEKDGHDK) are disordered. One can recognise an HD domain in the interval 60–233 (RLTHSLEVAQ…MDLADDIAYS (174 aa)).

Belongs to the dGTPase family. Type 2 subfamily.

The protein is Deoxyguanosinetriphosphate triphosphohydrolase-like protein 2 of Mesorhizobium japonicum (strain LMG 29417 / CECT 9101 / MAFF 303099) (Mesorhizobium loti (strain MAFF 303099)).